A 1225-amino-acid chain; its full sequence is Hyphally regulated cell wall protein 4 (1225 aa).

The N-terminal stretch at 1–20 (MFSYSQAIRFIIFLLPICLT) is a signal peptide. N-linked (GlcNAc...) asparagine glycans are attached at residues asparagine 97, asparagine 200, asparagine 488, asparagine 595, asparagine 634, and asparagine 694. The segment at 832–852 (DLDLPDDTTFTPSQSSSTTVP) is disordered. Low complexity predominate over residues 838 to 852 (DTTFTPSQSSSTTVP). 2 N-linked (GlcNAc...) asparagine glycosylation sites follow: asparagine 933 and asparagine 1035. Residues 1049-1114 (AYTQQDASTQ…NSHFEGTFIS (66 aa)) form a disordered region. N-linked (GlcNAc...) asparagine glycosylation is found at asparagine 1133, asparagine 1150, asparagine 1182, and asparagine 1193. A lipid anchor (GPI-anchor amidated serine) is attached at serine 1195. The propeptide at 1196 to 1225 (GLISKSESVVLLIRPVMIFVFLAICVVIML) is removed in mature form.

It belongs to the HYR1/IFF family. In terms of processing, the GPI-anchor is attached to the protein in the endoplasmic reticulum and serves to target the protein to the cell surface. There, the glucosamine-inositol phospholipid moiety is cleaved off and the GPI-modified mannoprotein is covalently attached via its lipidless GPI glycan remnant to the 1,6-beta-glucan of the outer cell wall layer.

The protein resides in the secreted. Its subcellular location is the cell wall. The protein localises to the membrane. Functionally, GPI-anchored cell wall protein involved in cell wall organization, hyphal growth, as well as in host-fungal interaction and virulence. This chain is Hyphally regulated cell wall protein 4 (HYR4), found in Candida albicans (strain SC5314 / ATCC MYA-2876) (Yeast).